Consider the following 186-residue polypeptide: Orotate phosphoribosyltransferase (186 aa).

Residues arginine 96, lysine 100, histidine 102, and 121–129 each bind 5-phospho-alpha-D-ribose 1-diphosphate; that span reads DDVATTGTS. 2 residues coordinate orotate: threonine 125 and arginine 153.

It belongs to the purine/pyrimidine phosphoribosyltransferase family. PyrE subfamily. As to quaternary structure, homodimer. Mg(2+) serves as cofactor.

It catalyses the reaction orotidine 5'-phosphate + diphosphate = orotate + 5-phospho-alpha-D-ribose 1-diphosphate. Its pathway is pyrimidine metabolism; UMP biosynthesis via de novo pathway; UMP from orotate: step 1/2. Catalyzes the transfer of a ribosyl phosphate group from 5-phosphoribose 1-diphosphate to orotate, leading to the formation of orotidine monophosphate (OMP). The polypeptide is Orotate phosphoribosyltransferase (Aeropyrum pernix (strain ATCC 700893 / DSM 11879 / JCM 9820 / NBRC 100138 / K1)).